The sequence spans 611 residues: Chloroplast sensor kinase, chloroplastic (611 aa).

The N-terminal 79 residues, 1–79 (MLLSAIASQT…PGGGETMVAS (79 aa)), are a transit peptide targeting the chloroplast. Positions 17–50 (NLHFSNSIPNPRPSNPSLKLLNASSSSSSSSSSS) are disordered. Over residues 40-50 (SSSSSSSSSSS) the composition is skewed to low complexity. The GAF stretch occupies residues 116–300 (DFQRLCLEQL…VMDQKTMLLQ (185 aa)). Cys-121 contacts [3Fe-4S] cluster. Ser-188 is modified (phosphoserine). Residues 312–602 (KLVEQIRGPL…RVELWLPAFP (291 aa)) enclose the Histidine kinase domain. Residues 345-380 (VEDLIVQGDQIKDTLEELQDAVHLTKANIVRHNEEA) are a coiled coil. The segment covering 385-402 (NKTHNETRRSKYEHKDPI) has biased composition (basic and acidic residues). Residues 385–420 (NKTHNETRRSKYEHKDPIDGSQISSTRLSLGSGLDD) form a disordered region.

This sequence belongs to the chloroplast sensor kinase protein family. As to quaternary structure, self-interacts. Interacts with the plastoquinone analog 2,5-dibromo-3-methyl-5-isopropyl-p-benzoquinone (DBMIB) and with SIGA/SIG1. [3Fe-4S] cluster serves as cofactor. Post-translationally, autophosphorylated, possibly on tyrosine residues, in photosystem I (PS I) light and in the presence of manganese ions Mn(2+), to a lesser degree, in the presence of calcium ions Ca(2+), but not in the presence of magnesium ions Mg(2+). Dithiothreitol (DTT) stimulates autophosphorylation. Phosphorylated on Ser-188 in vivo after exposure to far-red light (when plastoquinone (PQ) is oxidized). Not phosphorylated under orange light (reduces PQ).

The protein resides in the plastid. Its subcellular location is the chloroplast stroma. The enzyme catalyses L-tyrosyl-[protein] + ATP = O-phospho-L-tyrosyl-[protein] + ADP + H(+). Its function is as follows. Sensor kinase that senses the plastoquinone (PQ) redox state involved in stoichiometry adjustment of both photosystems (e.g. long-term adaptation via transcriptional regulation of reaction center genes of photosystems I and II) and state transitions (e.g. short-term adaptation involving reversible post-translational phosphorylation of light-harvesting complex II, LHC II), thus linking photosynthesis with gene expression in chloroplasts. Autophosphorylates, probably on a tyrosine residue. Probably phosphorylates SIGA/SIG1 in response to plastoquinone redox state modification. Reduced PQ suppresses its autophosphorylation activity. Represses expression of a number of chloroplast-encoded genes. The sequence is that of Chloroplast sensor kinase, chloroplastic from Arabidopsis thaliana (Mouse-ear cress).